A 229-amino-acid chain; its full sequence is DNA repair protein RecO (229 aa).

It belongs to the RecO family.

Its function is as follows. Involved in DNA repair and RecF pathway recombination. In Legionella pneumophila (strain Corby), this protein is DNA repair protein RecO.